Reading from the N-terminus, the 207-residue chain is Large ribosomal subunit protein uL4 (207 aa).

The disordered stretch occupies residues 44–85; the sequence is MRQGTHKTKNRAEVSGGGRKPWRQKGTGRARQGSIRSPQWRG.

This sequence belongs to the universal ribosomal protein uL4 family. In terms of assembly, part of the 50S ribosomal subunit.

Functionally, one of the primary rRNA binding proteins, this protein initially binds near the 5'-end of the 23S rRNA. It is important during the early stages of 50S assembly. It makes multiple contacts with different domains of the 23S rRNA in the assembled 50S subunit and ribosome. In terms of biological role, forms part of the polypeptide exit tunnel. This is Large ribosomal subunit protein uL4 from Geobacillus thermodenitrificans (strain NG80-2).